The following is a 197-amino-acid chain: Beta-crystallin A2 (197 aa).

The tract at residues 1–11 (MSSAPAQGPAP) is N-terminal arm. Beta/gamma crystallin 'Greek key' domains follow at residues 12 to 52 (ASLT…KVEN) and 53 to 99 (GAWV…RPVL). Residues 100 to 105 (CANHSD) form a connecting peptide region. Beta/gamma crystallin 'Greek key' domains are found at residues 106–147 (SRVT…KVSS) and 148–196 (GAWV…RRVQ).

The protein belongs to the beta/gamma-crystallin family. As to quaternary structure, homo/heterodimer, or complexes of higher-order. The structure of beta-crystallin oligomers seems to be stabilized through interactions between the N-terminal arms.

In terms of biological role, crystallins are the dominant structural components of the vertebrate eye lens. This chain is Beta-crystallin A2 (CRYBA2), found in Bos taurus (Bovine).